Reading from the N-terminus, the 326-residue chain is DNA repair protein RAD51 homolog 4 (326 aa).

The interval 1–83 (MGVLRAGLCP…ELKTSTAILS (83 aa)) is preferentially binds ssDNA. 107 to 114 (GAPGSGKT) lines the ATP pocket.

Belongs to the RecA family. RAD51 subfamily. As to quaternary structure, part of the BCDX2 complex consisting of RAD51B, RAD51C, RAD51D and XRCC2; the complex has a ring-like structure arranged into a flat disc around a central channel. In the absence of DNA, the BCDX2 subcomplex XRCC2:RAD51D formed a multimeric ring structure; in the presence of single-stranded DNA it formed a filamentous structure with the ssDNA. Interacts with SWSAP1 and ZSWIM7; involved in homologous recombination repair. Interacts with BLM; required for stimulation of BLM activity by the BCDX2 subcomplex XRCC2:RAD51D.

Its subcellular location is the nucleus. Functionally, involved in the homologous recombination repair (HRR) pathway of double-stranded DNA breaks arising during DNA replication or induced by DNA-damaging agents. Bind to single-stranded DNA (ssDNA) and has DNA-dependent ATPase activity. Part of the RAD51 paralog protein complex BCDX2 which acts in the BRCA1-BRCA2-dependent HR pathway. Upon DNA damage, BCDX2 acts downstream of BRCA2 recruitment and upstream of RAD51 recruitment. BCDX2 binds predominantly to the intersection of the four duplex arms of the Holliday junction and to junction of replication forks. The BCDX2 complex was originally reported to bind single-stranded DNA, single-stranded gaps in duplex DNA and specifically to nicks in duplex DNA. Involved in telomere maintenance. The BCDX2 subcomplex XRCC2:RAD51D can stimulate Holliday junction resolution by BLM. The protein is DNA repair protein RAD51 homolog 4 (RAD51D) of Bos taurus (Bovine).